Here is a 266-residue protein sequence, read N- to C-terminus: Putative pyruvate, phosphate dikinase regulatory protein (266 aa).

149-156 is an ADP binding site; the sequence is GVSRTSKT.

This sequence belongs to the pyruvate, phosphate/water dikinase regulatory protein family. PDRP subfamily.

The catalysed reaction is N(tele)-phospho-L-histidyl/L-threonyl-[pyruvate, phosphate dikinase] + ADP = N(tele)-phospho-L-histidyl/O-phospho-L-threonyl-[pyruvate, phosphate dikinase] + AMP + H(+). The enzyme catalyses N(tele)-phospho-L-histidyl/O-phospho-L-threonyl-[pyruvate, phosphate dikinase] + phosphate + H(+) = N(tele)-phospho-L-histidyl/L-threonyl-[pyruvate, phosphate dikinase] + diphosphate. Bifunctional serine/threonine kinase and phosphorylase involved in the regulation of the pyruvate, phosphate dikinase (PPDK) by catalyzing its phosphorylation/dephosphorylation. The chain is Putative pyruvate, phosphate dikinase regulatory protein from Geobacillus thermodenitrificans (strain NG80-2).